We begin with the raw amino-acid sequence, 471 residues long: Argininosuccinate lyase (471 aa).

This sequence belongs to the lyase 1 family. Argininosuccinate lyase subfamily.

Its subcellular location is the cytoplasm. The enzyme catalyses 2-(N(omega)-L-arginino)succinate = fumarate + L-arginine. It functions in the pathway amino-acid biosynthesis; L-arginine biosynthesis; L-arginine from L-ornithine and carbamoyl phosphate: step 3/3. The chain is Argininosuccinate lyase from Ehrlichia canis (strain Jake).